Here is a 214-residue protein sequence, read N- to C-terminus: Imidazole glycerol phosphate synthase subunit HisH (214 aa).

The 213-residue stretch at Arg-2–Pro-214 folds into the Glutamine amidotransferase type-1 domain. Cys-88 serves as the catalytic Nucleophile. Active-site residues include His-194 and Glu-196.

In terms of assembly, heterodimer of HisH and HisF.

It is found in the cytoplasm. The enzyme catalyses 5-[(5-phospho-1-deoxy-D-ribulos-1-ylimino)methylamino]-1-(5-phospho-beta-D-ribosyl)imidazole-4-carboxamide + L-glutamine = D-erythro-1-(imidazol-4-yl)glycerol 3-phosphate + 5-amino-1-(5-phospho-beta-D-ribosyl)imidazole-4-carboxamide + L-glutamate + H(+). It carries out the reaction L-glutamine + H2O = L-glutamate + NH4(+). It participates in amino-acid biosynthesis; L-histidine biosynthesis; L-histidine from 5-phospho-alpha-D-ribose 1-diphosphate: step 5/9. In terms of biological role, IGPS catalyzes the conversion of PRFAR and glutamine to IGP, AICAR and glutamate. The HisH subunit catalyzes the hydrolysis of glutamine to glutamate and ammonia as part of the synthesis of IGP and AICAR. The resulting ammonia molecule is channeled to the active site of HisF. The sequence is that of Imidazole glycerol phosphate synthase subunit HisH from Rhodospirillum rubrum (strain ATCC 11170 / ATH 1.1.1 / DSM 467 / LMG 4362 / NCIMB 8255 / S1).